We begin with the raw amino-acid sequence, 59 residues long: Cecropin-A (59 aa).

The first 23 residues, 1 to 23 (MNFNKLFVIVLLAALAFFGQAEA), serve as a signal peptide directing secretion. Leucine 57 is modified (leucine amide).

It belongs to the cecropin family.

The protein resides in the secreted. Its function is as follows. Cecropins have lytic and antibacterial activity against several Gram-positive and Gram-negative bacteria. In Culex pipiens pipiens (Northern house mosquito), this protein is Cecropin-A (CECA).